Reading from the N-terminus, the 405-residue chain is 3-hydroxy-3-methylglutaryl-coenzyme A reductase (405 aa).

Active-site charge relay system residues include E101 and D305. The Proton donor role is filled by H400.

This sequence belongs to the HMG-CoA reductase family. As to quaternary structure, homodimer.

It localises to the cytoplasm. The enzyme catalyses (R)-mevalonate + 2 NADP(+) + CoA = (3S)-3-hydroxy-3-methylglutaryl-CoA + 2 NADPH + 2 H(+). The protein operates within metabolic intermediate biosynthesis; (R)-mevalonate biosynthesis; (R)-mevalonate from acetyl-CoA: step 3/3. Its activity is regulated as follows. Is competitively inhibited by lovastatin (formerly called mevinolin). Lovastatin also blocks the growth of H.salinarum, and this effect is reversed by addition of mevalonate, indicating the critical role that the mevalonate pathway plays in isoprenoid biosynthesis by these archaea. Its function is as follows. Catalyzes the NADPH-dependent reductive deacylation of (S)-3-hydroxy-3-methylglutaryl-CoA (HMG-CoA) to (R)-mevalonate. Cannot use NADH instead of NADPH. Functions in the mevalonate (MVA) pathway leading to isopentenyl diphosphate (IPP), a key precursor for the biosynthesis of isoprenoid compounds such as archaeal membrane lipids. In Halobacterium salinarum (strain ATCC 29341 / DSM 671 / R1), this protein is 3-hydroxy-3-methylglutaryl-coenzyme A reductase (hmgA).